The chain runs to 98 residues: NADH-ubiquinone oxidoreductase chain 4L (98 aa).

3 helical membrane passes run 1–21 (MSLV…GLLM), 29–49 (SLLC…IMIL), and 61–81 (IILL…LVMV).

The protein belongs to the complex I subunit 4L family. As to quaternary structure, core subunit of respiratory chain NADH dehydrogenase (Complex I) which is composed of 45 different subunits.

It is found in the mitochondrion inner membrane. The catalysed reaction is a ubiquinone + NADH + 5 H(+)(in) = a ubiquinol + NAD(+) + 4 H(+)(out). Functionally, core subunit of the mitochondrial membrane respiratory chain NADH dehydrogenase (Complex I) which catalyzes electron transfer from NADH through the respiratory chain, using ubiquinone as an electron acceptor. Part of the enzyme membrane arm which is embedded in the lipid bilayer and involved in proton translocation. This chain is NADH-ubiquinone oxidoreductase chain 4L (MT-ND4L), found in Sorex unguiculatus (Long-clawed shrew).